A 158-amino-acid polypeptide reads, in one-letter code: 6,7-dimethyl-8-ribityllumazine synthase (158 aa).

5-amino-6-(D-ribitylamino)uracil-binding positions include Phe-22, 57–59, and 81–83; these read AVE and AVI. 86–87 contributes to the (2S)-2-hydroxy-3-oxobutyl phosphate binding site; the sequence is GT. His-89 (proton donor) is an active-site residue. Residue Phe-114 participates in 5-amino-6-(D-ribitylamino)uracil binding. Arg-128 serves as a coordination point for (2S)-2-hydroxy-3-oxobutyl phosphate.

This sequence belongs to the DMRL synthase family. As to quaternary structure, forms an icosahedral capsid composed of 60 subunits, arranged as a dodecamer of pentamers.

The enzyme catalyses (2S)-2-hydroxy-3-oxobutyl phosphate + 5-amino-6-(D-ribitylamino)uracil = 6,7-dimethyl-8-(1-D-ribityl)lumazine + phosphate + 2 H2O + H(+). It participates in cofactor biosynthesis; riboflavin biosynthesis; riboflavin from 2-hydroxy-3-oxobutyl phosphate and 5-amino-6-(D-ribitylamino)uracil: step 1/2. Its function is as follows. Catalyzes the formation of 6,7-dimethyl-8-ribityllumazine by condensation of 5-amino-6-(D-ribitylamino)uracil with 3,4-dihydroxy-2-butanone 4-phosphate. This is the penultimate step in the biosynthesis of riboflavin. This Shewanella pealeana (strain ATCC 700345 / ANG-SQ1) protein is 6,7-dimethyl-8-ribityllumazine synthase.